The following is a 95-amino-acid chain: Late cornified envelope protein 7A (95 aa).

The protein belongs to the LCE family.

In terms of biological role, precursors of the cornified envelope of the stratum corneum. This Homo sapiens (Human) protein is Late cornified envelope protein 7A.